Consider the following 294-residue polypeptide: 4-hydroxy-tetrahydrodipicolinate synthase (294 aa).

Pyruvate is bound at residue Thr-45. The Proton donor/acceptor role is filled by Tyr-133. Lys-161 acts as the Schiff-base intermediate with substrate in catalysis. Residue Ile-203 coordinates pyruvate.

The protein belongs to the DapA family. In terms of assembly, homotetramer; dimer of dimers.

It localises to the cytoplasm. It carries out the reaction L-aspartate 4-semialdehyde + pyruvate = (2S,4S)-4-hydroxy-2,3,4,5-tetrahydrodipicolinate + H2O + H(+). Its pathway is amino-acid biosynthesis; L-lysine biosynthesis via DAP pathway; (S)-tetrahydrodipicolinate from L-aspartate: step 3/4. In terms of biological role, catalyzes the condensation of (S)-aspartate-beta-semialdehyde [(S)-ASA] and pyruvate to 4-hydroxy-tetrahydrodipicolinate (HTPA). This Shewanella baltica (strain OS223) protein is 4-hydroxy-tetrahydrodipicolinate synthase.